Reading from the N-terminus, the 91-residue chain is Putative defensin-like protein 145 (91 aa).

An N-terminal signal peptide occupies residues 1–26; sequence MNKNIIFSFTVLTLFVIFVQVTGVIG. N-linked (GlcNAc...) asparagine glycans are attached at residues Asn35 and Asn68. Cystine bridges form between Cys39–Cys84, Cys52–Cys74, Cys57–Cys78, and Cys61–Cys80.

Belongs to the DEFL family.

The protein localises to the secreted. In Arabidopsis thaliana (Mouse-ear cress), this protein is Putative defensin-like protein 145 (LCR2).